Reading from the N-terminus, the 372-residue chain is BTB/POZ and TAZ domain-containing protein 4 (372 aa).

A disordered region spans residues 14–37 (SADSSSVPIPPPLPSKSDGLKKKL). Positions 60-128 (ADVVIYTDNG…LYSSCYEKEE (69 aa)) constitute a BTB domain. The segment at 238 to 330 (RIYSQLYEAM…SDQCRVPLCR (93 aa)) adopts a TAZ-type zinc-finger fold. Residues 341 to 364 (KKDESRWKLLVKNVLGSKKIGGSP) are caM-binding.

In terms of assembly, interacts with GTE11/BET10 through the BTB domain. Preferentially expressed in leaves, stems and flowers.

It is found in the cytoplasm. It participates in protein modification; protein ubiquitination. Functionally, may act as a substrate-specific adapter of an E3 ubiquitin-protein ligase complex (CUL3-RBX1-BTB) which mediates the ubiquitination and subsequent proteasomal degradation of target proteins. The protein is BTB/POZ and TAZ domain-containing protein 4 (BT4) of Arabidopsis thaliana (Mouse-ear cress).